Reading from the N-terminus, the 237-residue chain is MAKRIISQNRGRGSPTYRAPSHKYKAELKHPRVDEESTLNGTVIGIEHDPARSAPIAMVAFENGKKQFIVVPEGISVGEKLSCGVSAEVKPGNTLPLAEIPEGIPICNIESKPNDGGQYARSSGVYATLVSRELSKVVVRMPSGVLKWFHPKCRATIGIVAGGGRVDRPFLKAGKKYHKMKARAAKYPRVSGIAMNVVDHPFGGGNRKHPGKPTTVSRNAPPGRKVGHIAARRTGKR.

The interval 202-237 is disordered; it reads FGGGNRKHPGKPTTVSRNAPPGRKVGHIAARRTGKR. The segment covering 225–237 has biased composition (basic residues); sequence KVGHIAARRTGKR.

It belongs to the universal ribosomal protein uL2 family. As to quaternary structure, part of the 50S ribosomal subunit. Forms a bridge to the 30S subunit in the 70S ribosome.

In terms of biological role, one of the primary rRNA binding proteins. Required for association of the 30S and 50S subunits to form the 70S ribosome, for tRNA binding and peptide bond formation. It has been suggested to have peptidyltransferase activity; this is somewhat controversial. Makes several contacts with the 16S rRNA in the 70S ribosome. This Methanococcoides burtonii (strain DSM 6242 / NBRC 107633 / OCM 468 / ACE-M) protein is Large ribosomal subunit protein uL2.